Consider the following 241-residue polypeptide: tRNA pseudouridine synthase B (241 aa).

Aspartate 52 functions as the Nucleophile in the catalytic mechanism.

It belongs to the pseudouridine synthase TruB family. Type 1 subfamily.

The catalysed reaction is uridine(55) in tRNA = pseudouridine(55) in tRNA. Functionally, responsible for synthesis of pseudouridine from uracil-55 in the psi GC loop of transfer RNAs. The protein is tRNA pseudouridine synthase B of Chloroherpeton thalassium (strain ATCC 35110 / GB-78).